The chain runs to 156 residues: Small ribosomal subunit protein uS7 (156 aa).

Belongs to the universal ribosomal protein uS7 family. Part of the 30S ribosomal subunit. Contacts proteins S9 and S11.

Functionally, one of the primary rRNA binding proteins, it binds directly to 16S rRNA where it nucleates assembly of the head domain of the 30S subunit. Is located at the subunit interface close to the decoding center, probably blocks exit of the E-site tRNA. The protein is Small ribosomal subunit protein uS7 of Methylobacterium nodulans (strain LMG 21967 / CNCM I-2342 / ORS 2060).